The following is a 234-amino-acid chain: MMNELFGEFLGTLILILLGNGVVAGVVLPKTKSNSSGWIVITMGWGIAVAVAVFVSGKLSPAHLNPAVTIGVALKGGLPWASVLPYILAQFAGAMLGQILVWLQFKPHYEAEENAGNILATFSTGPAIKDTVSNLISEILGTFVLVLTIFALGLYDFQAGIGTFAVGTLIVGIGLSLGGTTGYALNPARDLGPRIMHSILPIPNKGDGDWSYAWIPVVGPVIGAALAVLVFSLF.

6 consecutive transmembrane segments (helical) span residues F9 to P29, G37 to G57, P61 to A81, V83 to L103, L135 to Y155, and A159 to G179. An NPA 1 motif is present at residues N65–A67. An NPA 2 motif is present at residues N186 to A188. The helical transmembrane segment at W214–F234 threads the bilayer.

The protein belongs to the MIP/aquaporin (TC 1.A.8) family.

The protein localises to the cell membrane. It catalyses the reaction glycerol(in) = glycerol(out). In terms of biological role, mediates glycerol diffusion across the cytoplasmic membrane via a pore-type mechanism. The chain is Glycerol uptake facilitator protein (glpF) from Streptococcus pneumoniae (strain ATCC BAA-255 / R6).